Consider the following 492-residue polypeptide: MANYFNSLNLRQQLAQLGQCRFMDRSEFSDGCNYIKDWNIVILGCGAQGLNQGLNMRDSGLNIAYALRPEAIAQKRASWQKATDNGFKVGTFEELIPSADLVLNLTPDKQHSNVVSAVMPLMKQGATLSYSHGFNIVEEGMQIRPDITVIMVAPKCPGTEVREEYKRGFGVPTLIAVHPENDPNGDGLDIAKAYASATGGDRAGVLQSSFIAEVKSDLMGEQTILCGMLQTGAILGYEKMVADGVEPGYAAKLIQQGWETVTEALKHGGITNMMDRLSNPAKIKAFEIAEDLKDILQPLFEKHMDDIISGEFSRTMMQDWANDDANLLRWRAETGETGFENAPVSSEHIDEQTYFDKGIFLVAMIKAGVELAFDTMVSAGIVEESAYYESLHETPLIANTIARKRLYEMNVVISDTAEYGCYLFNHAAVPLLRDYVNAMSPEYLGAGLKDSSNSVDNLQLIAINDAIRHTAVEYVGAELRGYMTDMKSIVGA.

A KARI N-terminal Rossmann domain is found at 15 to 208 (AQLGQCRFMD…GGDRAGVLQS (194 aa)). NADP(+) is bound by residues 45-48 (CGAQ), arginine 68, arginine 76, serine 78, and 108-110 (DKQ). The active site involves histidine 132. NADP(+) is bound at residue glycine 158. KARI C-terminal knotted domains follow at residues 209–353 (SFIA…DEQT) and 354–486 (YFDK…MTDM). Residues aspartate 217, glutamate 221, glutamate 389, and glutamate 393 each contribute to the Mg(2+) site. Serine 414 is a substrate binding site.

This sequence belongs to the ketol-acid reductoisomerase family. It depends on Mg(2+) as a cofactor.

The enzyme catalyses (2R)-2,3-dihydroxy-3-methylbutanoate + NADP(+) = (2S)-2-acetolactate + NADPH + H(+). The catalysed reaction is (2R,3R)-2,3-dihydroxy-3-methylpentanoate + NADP(+) = (S)-2-ethyl-2-hydroxy-3-oxobutanoate + NADPH + H(+). It participates in amino-acid biosynthesis; L-isoleucine biosynthesis; L-isoleucine from 2-oxobutanoate: step 2/4. It functions in the pathway amino-acid biosynthesis; L-valine biosynthesis; L-valine from pyruvate: step 2/4. In terms of biological role, involved in the biosynthesis of branched-chain amino acids (BCAA). Catalyzes an alkyl-migration followed by a ketol-acid reduction of (S)-2-acetolactate (S2AL) to yield (R)-2,3-dihydroxy-isovalerate. In the isomerase reaction, S2AL is rearranged via a Mg-dependent methyl migration to produce 3-hydroxy-3-methyl-2-ketobutyrate (HMKB). In the reductase reaction, this 2-ketoacid undergoes a metal-dependent reduction by NADPH to yield (R)-2,3-dihydroxy-isovalerate. The sequence is that of Ketol-acid reductoisomerase (NADP(+)) from Shewanella oneidensis (strain ATCC 700550 / JCM 31522 / CIP 106686 / LMG 19005 / NCIMB 14063 / MR-1).